A 365-amino-acid polypeptide reads, in one-letter code: Beta-parvin (365 aa).

Over residues 1–12 (MSSAPPRSPTPR) the composition is skewed to pro residues. The segment at 1–52 (MSSAPPRSPTPRAPKMKKDESFLGKLGGTLARKKKTREVTDLQEEGKSAINS) is disordered. Ser8 carries the phosphoserine modification. Basic and acidic residues predominate over residues 37 to 47 (REVTDLQEEGK). Calponin-homology (CH) domains follow at residues 88-195 (KELV…MHFR) and 255-362 (NLVK…TKYK).

This sequence belongs to the parvin family. In terms of assembly, interacts with ILK, ARHGEF6, PXN (via LD motifs), ACTN2 and actin. Interacts with DYSF. Post-translationally, phosphorylated by ILK. In terms of tissue distribution, expressed predominantly in heart and moderately in spleen, lung and skeletal muscle.

The protein localises to the cell junction. The protein resides in the focal adhesion. It localises to the cell membrane. It is found in the cytoplasm. Its subcellular location is the cytoskeleton. The protein localises to the cell projection. The protein resides in the lamellipodium. It localises to the myofibril. It is found in the sarcomere. Its subcellular location is the z line. In terms of biological role, adapter protein that plays a role in integrin signaling via ILK and in activation of the GTPases CDC42 and RAC1 by guanine exchange factors, such as ARHGEF6. Is involved in the reorganization of the actin cytoskeleton and formation of lamellipodia. Plays a role in cell adhesion, cell spreading, establishment or maintenance of cell polarity, and cell migration. This chain is Beta-parvin (Parvb), found in Mus musculus (Mouse).